Reading from the N-terminus, the 271-residue chain is Tryptophan synthase alpha chain (271 aa).

Active-site proton acceptor residues include E49 and D60.

The protein belongs to the TrpA family. As to quaternary structure, tetramer of two alpha and two beta chains.

The enzyme catalyses (1S,2R)-1-C-(indol-3-yl)glycerol 3-phosphate + L-serine = D-glyceraldehyde 3-phosphate + L-tryptophan + H2O. Its pathway is amino-acid biosynthesis; L-tryptophan biosynthesis; L-tryptophan from chorismate: step 5/5. In terms of biological role, the alpha subunit is responsible for the aldol cleavage of indoleglycerol phosphate to indole and glyceraldehyde 3-phosphate. The polypeptide is Tryptophan synthase alpha chain (Buchnera aphidicola subsp. Schizaphis graminum (strain Sg)).